Consider the following 510-residue polypeptide: NAD(P)H-quinone oxidoreductase subunit 2 A, chloroplastic (510 aa).

13 helical membrane passes run 24 to 44, 57 to 77, 99 to 119, 124 to 144, 149 to 169, 183 to 203, 227 to 247, 295 to 315, 323 to 343, 347 to 367, 395 to 415, 418 to 438, and 484 to 504; these read LLLF…GLIL, IPWL…ALLF, IFQF…VEYI, MAIT…MFLC, LITI…LSGY, YLLM…WLYG, PGIS…LSPA, WHLL…LIAI, MLAY…IVGD, GYAS…GTFA, ALSS…AGFF, LHLF…IGLL, and MIVC…IIAI.

It belongs to the complex I subunit 2 family. As to quaternary structure, NDH is composed of at least 16 different subunits, 5 of which are encoded in the nucleus.

The protein resides in the plastid. It is found in the chloroplast thylakoid membrane. The enzyme catalyses a plastoquinone + NADH + (n+1) H(+)(in) = a plastoquinol + NAD(+) + n H(+)(out). It catalyses the reaction a plastoquinone + NADPH + (n+1) H(+)(in) = a plastoquinol + NADP(+) + n H(+)(out). Functionally, NDH shuttles electrons from NAD(P)H:plastoquinone, via FMN and iron-sulfur (Fe-S) centers, to quinones in the photosynthetic chain and possibly in a chloroplast respiratory chain. The immediate electron acceptor for the enzyme in this species is believed to be plastoquinone. Couples the redox reaction to proton translocation, and thus conserves the redox energy in a proton gradient. In Platanus occidentalis (Sycamore), this protein is NAD(P)H-quinone oxidoreductase subunit 2 A, chloroplastic.